Here is a 146-residue protein sequence, read N- to C-terminus: Leghemoglobin 1 (146 aa).

Residues Gly-2–Gly-146 form the Globin domain. Tyr-29 bears the Nitrated tyrosine mark. Ser-44 provides a ligand contact to heme b. Ser-44 carries the post-translational modification Phosphoserine. His-61 is an O2 binding site. Positions 64, 93, and 96 each coordinate heme b. Tyr-134 is modified (nitrated tyrosine).

The protein belongs to the plant globin family. Monomer. In terms of processing, nitrated in effective nodules and particularly in hypoxic conditions; this mechanism may play a protective role in the symbiosis by buffering toxic peroxynitrite NO(2)(-). Nitration level decrease during nodule senescence. Post-translationally, phosphorylation at Ser-44 disrupts the molecular environment of its porphyrin ring oxygen binding pocket, thus leading to a reduced oxygen consumption and to the delivery of oxygen O(2) to symbiosomes. Root nodules.

Its subcellular location is the cytoplasm. It localises to the cytosol. The protein resides in the nucleus. Functionally, leghemoglobin that reversibly binds oxygen O(2) through a pentacoordinated heme iron. In root nodules, facilitates the diffusion of oxygen to the bacteroids while preventing the bacterial nitrogenase from being inactivated by buffering dioxygen, nitric oxide and carbon monoxide, and promoting the formation of reactive oxygen species (ROS, e.g. H(2)O(2)). This role is essential for symbiotic nitrogen fixation (SNF). The polypeptide is Leghemoglobin 1 (Medicago truncatula (Barrel medic)).